A 465-amino-acid chain; its full sequence is E3 ubiquitin-protein ligase TRIM15 (465 aa).

The segment at 16 to 61 adopts an RING-type zinc-finger fold; that stretch reads CTLCVGPLEDAVTAPCGHTFCRLCLPTLSQMGAQSSGKILLCPLCQ. Residues 78 to 119 form a B box-type zinc finger; it reads LGETYCEEHGEKIYFFCENDAEFLCVFCREGPTHQAHTVGFL. Zn(2+)-binding residues include cysteine 83, histidine 86, cysteine 105, and histidine 111. Positions 126 to 229 form a coiled coil; it reads YRDRLRSRLE…VKELEEKCQQ (104 aa). Residues 276–465 enclose the B30.2/SPRY domain; that stretch reads EMMRMFSENL…KKGSCLTLKG (190 aa).

It belongs to the TRIM/RBCC family. As to quaternary structure, interacts with paxillin/PXN; this interaction recruits TRIM15 to focal adhesions. Interacts with TRIM8; this interaction prevents TRIM8 cytoplasmic translocation.

Its subcellular location is the cytoplasm. The protein resides in the nucleus. The protein localises to the cell junction. It is found in the focal adhesion. The enzyme catalyses S-ubiquitinyl-[E2 ubiquitin-conjugating enzyme]-L-cysteine + [acceptor protein]-L-lysine = [E2 ubiquitin-conjugating enzyme]-L-cysteine + N(6)-ubiquitinyl-[acceptor protein]-L-lysine.. Its function is as follows. E3 ubiquitin ligase that plays a role in several processes including innate antiviral immnity, cell migration and chemotaxis. Acts as a 'Lys-63'-specific ubiquitin ligase for MAPK1/ERK2 and MAPK3/ERK1, promoting their activation by facilitating their interaction with MAP2K1 and MAP2K2. Also plays a role in cell migration and chemotaxis by acting as a stable focal adhesion component upon recruitment by multi-adapter protein paxillin/PXN. Functions in the RIGI-mediated interferon induction pathway upstream or at the level of MAVS. Inhibits NF-kappa-B activation by turnover of 'Lys-63'-linked ubiquitination of MAP3K7/TAK1. Mechanistically, prevents TRIM8 cytoplasmic translocation and thus inhibits TRIM8-mediated 'Lys-63'-linked polyubiquitination of MAP3K7/TAK1 in the cytoplasm. Also has an important regulatory effect on the activation of hepatic stellate cells (HSCs). The chain is E3 ubiquitin-protein ligase TRIM15 (TRIM15) from Macaca mulatta (Rhesus macaque).